The sequence spans 460 residues: tRNA modification GTPase MnmE (460 aa).

The (6S)-5-formyl-5,6,7,8-tetrahydrofolate site is built by Arg29, Glu91, and Lys132. Residues 227–383 (GISIALIGKT…LIDTIIKKCG (157 aa)) enclose the TrmE-type G domain. Position 237 (Asn237) interacts with K(+). GTP is bound by residues 237-242 (NVGKSS), 256-262 (TNIPGTT), and 281-284 (DTAG). Mg(2+) is bound at residue Ser241. Positions 256, 258, and 261 each coordinate K(+). A Mg(2+)-binding site is contributed by Thr262. Residue Lys460 coordinates (6S)-5-formyl-5,6,7,8-tetrahydrofolate.

It belongs to the TRAFAC class TrmE-Era-EngA-EngB-Septin-like GTPase superfamily. TrmE GTPase family. As to quaternary structure, homodimer. Heterotetramer of two MnmE and two MnmG subunits. Requires K(+) as cofactor.

The protein resides in the cytoplasm. Functionally, exhibits a very high intrinsic GTPase hydrolysis rate. Involved in the addition of a carboxymethylaminomethyl (cmnm) group at the wobble position (U34) of certain tRNAs, forming tRNA-cmnm(5)s(2)U34. The sequence is that of tRNA modification GTPase MnmE from Prochlorococcus marinus (strain AS9601).